Here is a 382-residue protein sequence, read N- to C-terminus: tRNA (guanine-N(7)-)-methyltransferase non-catalytic subunit wuho (382 aa).

A disordered region spans residues 40–59 (VKDTDAGNEPNGNQTQPTPA). A compositionally biased stretch (polar residues) spans 49-59 (PNGNQTQPTPA). WD repeat units follow at residues 149 to 190 (GHMS…ECFC) and 192 to 230 (GHTE…ELSK).

It belongs to the WD repeat TRM82 family. Forms a heterodimer with the catalytic subunit.

The protein resides in the nucleus. Its pathway is tRNA modification; N(7)-methylguanine-tRNA biosynthesis. Required for the formation of N(7)-methylguanine at position 46 (m7G46) in tRNA. In the complex, it is required to stabilize and induce conformational changes of the catalytic subunit. The chain is tRNA (guanine-N(7)-)-methyltransferase non-catalytic subunit wuho from Anopheles gambiae (African malaria mosquito).